We begin with the raw amino-acid sequence, 397 residues long: L-asparaginase-like protein GM15681 (397 aa).

Positions 1–22 are cleaved as a signal peptide; it reads MLAQSCCLRLLILLLLFTSICS. 3 disulfide bridges follow: cysteine 90/cysteine 95, cysteine 189/cysteine 205, and cysteine 344/cysteine 371.

Belongs to the Ntn-hydrolase family.

In Drosophila sechellia (Fruit fly), this protein is L-asparaginase-like protein GM15681.